The primary structure comprises 146 residues: Large ribosomal subunit protein bL17 (146 aa).

Over residues 124–134 (EASRATRAAAS) the composition is skewed to low complexity. The tract at residues 124–146 (EASRATRAAASKKAEEEAASEAE) is disordered.

This sequence belongs to the bacterial ribosomal protein bL17 family. Part of the 50S ribosomal subunit. Contacts protein L32.

The sequence is that of Large ribosomal subunit protein bL17 from Corynebacterium kroppenstedtii (strain DSM 44385 / JCM 11950 / CIP 105744 / CCUG 35717).